A 117-amino-acid chain; its full sequence is Small ribosomal subunit protein uS17 (117 aa).

A disordered region spans residues 1 to 42 (MMAEAKKAAPKKAATAASKDADAKGPKHTPPNPKVRGRRKTR).

The protein belongs to the universal ribosomal protein uS17 family. In terms of assembly, part of the 30S ribosomal subunit.

In terms of biological role, one of the primary rRNA binding proteins, it binds specifically to the 5'-end of 16S ribosomal RNA. The polypeptide is Small ribosomal subunit protein uS17 (Mycolicibacterium paratuberculosis (strain ATCC BAA-968 / K-10) (Mycobacterium paratuberculosis)).